Consider the following 383-residue polypeptide: Guanine nucleotide-binding protein alpha-1 subunit (383 aa).

The disordered stretch occupies residues 1–20; that stretch reads MGLLCSRSRHHTEDTDENTQ. The N-myristoyl glycine moiety is linked to residue glycine 2. Cysteine 5 carries the S-palmitoyl cysteine lipid modification. A G-alpha domain is found at 37–383; it reads HIRKLLLLGA…RRNLLEAGLL (347 aa). The G1 motif stretch occupies residues 40 to 53; sequence KLLLLGAGESGKST. GTP is bound by residues glutamate 48, serine 49, glycine 50, lysine 51, serine 52, threonine 53, aspartate 162, leucine 187, tyrosine 188, threonine 193, glycine 221, asparagine 287, lysine 288, aspartate 290, and alanine 355. Serine 52 provides a ligand contact to Mg(2+). The tract at residues 185–193 is G2 motif; the sequence is DVLYARVRT. Residue threonine 193 participates in Mg(2+) binding. Residues 214–223 form a G3 motif region; sequence YRLFDVGGQR. Positions 283–290 are G4 motif; the sequence is MLFLNKFD. Residues 353 to 358 form a G5 motif region; sequence TTALDQ.

The protein belongs to the G-alpha family. As to quaternary structure, g proteins are composed of 3 units; alpha, beta and gamma. The alpha chain contains the guanine nucleotide binding site. Interacts with RGS1, THF1, the pirin protein PRN1, GTG1 and GTG2. Binds to GCR1. May interact with ADT3. No interactions with RACK1A, RACK1B or RACK1C. Interacts with PLDALPHA1. Interacts with CAND2/PMTR1. It depends on Mg(2+) as a cofactor. More abundant in roots and/or leaves.

It is found in the cell membrane. Functionally, exhibits a fast rate of basal nucleotide exchange. Guanine nucleotide-binding proteins (G proteins) are involved as modulators or transducers in various transmembrane signaling systems. Together with GCR1, may regulate the cell cycle via a signaling cascade that uses phosphatidylinositol-specific phospholipase C (PI-PLC) as an effector and inositol 1,4,5-trisphosphate (IP(3)) as a second messenger. Promotes abscisic acid (ABA) responses in guard cells. Involved in the blue light (BL) signaling. Together with GCR1 and ADT3, required for BL-mediated synthesis of phenylpyruvate and subsequently of phenylalanine (Phe), in etiolated seedlings. Modulates root architecture (e.g. lateral root formation). Negatively regulated by RGS1. In collaboration with CAND2/PMTR1, regulates the melatonin-mediated stomatal closure involving H(2)O(2) and Ca(2+) signals. This is Guanine nucleotide-binding protein alpha-1 subunit from Arabidopsis thaliana (Mouse-ear cress).